The following is a 239-amino-acid chain: MAAISAKDVKELRDKTGAGMMDCKKALQENDGDQEKAIAYLRKKGLSQAGKKSGRVTAEGLVDSYIHFGGQIGVLVEVNCETDFVARNEAFKELVQDIAKQIAACPNVQYVDTDEIPQDFVEKEKAVAMGSDALKGKPDNIKEKIVQGKLDKTLKELCLLHQPYIKDQSITVQELLQQAISKLGENMKVRRFTRFVLGEGIDKVESNLAEEVAAQTKPKAEEKPAAKKATSKKKKGKKK.

An involved in Mg(2+) ion dislocation from EF-Tu region spans residues 82-85; that stretch reads TDFV. Residues 213–239 are disordered; it reads AAQTKPKAEEKPAAKKATSKKKKGKKK. Residues 229–239 are compositionally biased toward basic residues; that stretch reads ATSKKKKGKKK.

Belongs to the EF-Ts family.

Its subcellular location is the cytoplasm. Functionally, associates with the EF-Tu.GDP complex and induces the exchange of GDP to GTP. It remains bound to the aminoacyl-tRNA.EF-Tu.GTP complex up to the GTP hydrolysis stage on the ribosome. This Acaryochloris marina (strain MBIC 11017) protein is Elongation factor Ts.